Here is a 491-residue protein sequence, read N- to C-terminus: Probable cytosol aminopeptidase (491 aa).

Positions 261 and 266 each coordinate Mn(2+). Lysine 273 is a catalytic residue. Mn(2+)-binding residues include aspartate 284, aspartate 343, and glutamate 345. The active site involves arginine 347.

Belongs to the peptidase M17 family. Mn(2+) serves as cofactor.

It is found in the cytoplasm. It catalyses the reaction Release of an N-terminal amino acid, Xaa-|-Yaa-, in which Xaa is preferably Leu, but may be other amino acids including Pro although not Arg or Lys, and Yaa may be Pro. Amino acid amides and methyl esters are also readily hydrolyzed, but rates on arylamides are exceedingly low.. The catalysed reaction is Release of an N-terminal amino acid, preferentially leucine, but not glutamic or aspartic acids.. Its function is as follows. Presumably involved in the processing and regular turnover of intracellular proteins. Catalyzes the removal of unsubstituted N-terminal amino acids from various peptides. The polypeptide is Probable cytosol aminopeptidase (Geobacter sp. (strain M21)).